The following is a 420-amino-acid chain: uncharacterized protein (420 aa).

Belongs to the Rv1128c/1148c/1588c/1702c/1945/3466 family.

This is an uncharacterized protein from Mycobacterium tuberculosis (strain CDC 1551 / Oshkosh).